A 610-amino-acid chain; its full sequence is MDSVAFEDVAVNFTQEEWALLGPSQKSLYRNVMQETIRNLDCIEMKWEDQNIGDQCQNAKRNLRSHTCEIKDDSQCGETFGQIPDSIVNKNTPRVNPCDSGECGEVVLGHSSLNCNIRVDTGHKSCEHQEYGEKPYTHKQRGKAISHQHSFQTHERPPTGKKPFDCKECAKTFSSLGNLRRHMAAHHGDGPYKCKLCGKAFVWPSLFHLHERTHTGEKPYECKQCSKAFPFYSSYLRHERIHTGEKAYECKQCSKAFPDYSTYLRHERTHTGEKPYKCTQCGKAFSCYYYTRLHERTHTGEQPYACKQCGKTFYHHTSFRRHMIRHTGDGPHKCKICGKGFDCPSSVRNHETTHTGEKPYECKQCGKVLSHSSSFRSHMITHTGDGPQKCKICGKAFGCPSLFQRHERTHTGEKPYQCKQCGKAFSLAGSLRRHEATHTGVKPYKCQCGKAFSDLSSFQNHETTHTGEKPYECKECGKAFSCFKYLSQHKRTHTVEKPYECKTCRKAFSHFSNLKVHERIHSGEKPYECKECGKAFSWLTCLLRHERIHTGEKPYECLQCGKAFTRSRFLRGHEKTHTGEKLYECKECGKALSSLRSLHRHKRTHWKDTL.

A KRAB domain is found at 4 to 97; sequence VAFEDVAVNF…VNKNTPRVNP (94 aa). 10 C2H2-type zinc fingers span residues 164 to 186, 192 to 214, 220 to 242, 248 to 270, 276 to 298, 304 to 326, 332 to 354, 360 to 382, 388 to 410, and 416 to 438; these read FDCKECAKTFSSLGNLRRHMAAH, YKCKLCGKAFVWPSLFHLHERTH, YECKQCSKAFPFYSSYLRHERIH, YECKQCSKAFPDYSTYLRHERTH, YKCTQCGKAFSCYYYTRLHERTH, YACKQCGKTFYHHTSFRRHMIRH, HKCKICGKGFDCPSSVRNHETTH, YECKQCGKVLSHSSSFRSHMITH, QKCKICGKAFGCPSLFQRHERTH, and YQCKQCGKAFSLAGSLRRHEATH. Residues 444–465 form a C2H2-type 11; atypical zinc finger; the sequence is YKCQCGKAFSDLSSFQNHETTH. C2H2-type zinc fingers lie at residues 471–493, 499–521, 527–549, 555–577, and 583–605; these read YECKECGKAFSCFKYLSQHKRTH, YECKTCRKAFSHFSNLKVHERIH, YECKECGKAFSWLTCLLRHERIH, YECLQCGKAFTRSRFLRGHEKTH, and YECKECGKALSSLRSLHRHKRTH.

This sequence belongs to the krueppel C2H2-type zinc-finger protein family.

The protein resides in the nucleus. In terms of biological role, may be involved in transcriptional regulation. This chain is Zinc finger protein 823 (ZNF823), found in Homo sapiens (Human).